A 476-amino-acid chain; its full sequence is Ovarian-specific serine/threonine-protein kinase Lok (476 aa).

The FHA domain occupies 69–129 (FTAGRGEAND…NGTFVNNEKI (61 aa)). In terms of domain architecture, Protein kinase spans 174–441 (YYVNRKLGSG…IDDVLQSSWL (268 aa)). Residues 180–188 (LGSGAYGLV) and lysine 203 each bind ATP. Catalysis depends on aspartate 303, which acts as the Proton acceptor.

It belongs to the protein kinase superfamily. CAMK Ser/Thr protein kinase family. CDS1 subfamily. In terms of tissue distribution, in stage 3 embryos, both isoforms are expressed in both somatic and pole cell nuclei. Expression in pole cell nuclei is sustained until stage 9 and weakly expressed after pole cell invagination into the abdominal cavity.

It is found in the nucleus speckle. The enzyme catalyses L-seryl-[protein] + ATP = O-phospho-L-seryl-[protein] + ADP + H(+). It carries out the reaction L-threonyl-[protein] + ATP = O-phospho-L-threonyl-[protein] + ADP + H(+). Its function is as follows. May have a role in germline establishment. The polypeptide is Ovarian-specific serine/threonine-protein kinase Lok (lok) (Drosophila melanogaster (Fruit fly)).